The primary structure comprises 290 residues: Ribonuclease 3 (290 aa).

Positions 20-145 (YSCFYRILGF…FIGAIYLDRG (126 aa)) constitute an RNase III domain. Residue Glu62 coordinates Mg(2+). Asp66 is a catalytic residue. Mg(2+) contacts are provided by Asn131 and Glu134. Residue Glu134 is part of the active site. Residues 173-242 (NFKSKLIEWS…AQMTLKKIKG (70 aa)) enclose the DRBM domain. The interval 254–290 (KTQNNVPAEDTTPESETSLTAENQQIDEIISTEEISV) is disordered. Over residues 267-279 (ESETSLTAENQQI) the composition is skewed to polar residues.

This sequence belongs to the ribonuclease III family. As to quaternary structure, homodimer. The cofactor is Mg(2+).

It localises to the cytoplasm. It carries out the reaction Endonucleolytic cleavage to 5'-phosphomonoester.. Digests double-stranded RNA. Involved in the processing of primary rRNA transcript to yield the immediate precursors to the large and small rRNAs (23S and 16S). Processes some mRNAs, and tRNAs when they are encoded in the rRNA operon. Processes pre-crRNA and tracrRNA of type II CRISPR loci if present in the organism. In Bacteroides fragilis (strain ATCC 25285 / DSM 2151 / CCUG 4856 / JCM 11019 / LMG 10263 / NCTC 9343 / Onslow / VPI 2553 / EN-2), this protein is Ribonuclease 3.